The chain runs to 154 residues: Photosystem II extrinsic protein U, chloroplastic (154 aa).

Residues 1 to 36 constitute a chloroplast transit peptide; sequence MAFISTPLGKVTVKSATVSANRRGLRMQSDSEPVVS. The transit peptide at 37-61 directs the protein to the thylakoid; sequence RRALLSGALAAAVAAALARARPAQA.

Belongs to the PsbU family. PSII is composed of 1 copy each of membrane proteins PsbA, PsbB, PsbC, PsbD, PsbE, PsbF, PsbH, PsbI, PsbJ, PsbK, PsbL, PsbM, PsbT, PsbY, PsbZ, Psb30/Ycf12, at least 3 peripheral proteins of the oxygen-evolving complex and a large number of cofactors. It forms dimeric complexes. The extrinsic subunits in red algae are PsbO (OEC33), PsbQ', cytochrome c-550 and PsbU. Post-translationally, predicted to be translocated into the thylakoid lumen by the Tat system. The position of the first transit peptide cleavage has not been experimentally proven.

It is found in the plastid. It localises to the chloroplast thylakoid membrane. Functionally, one of the extrinsic, lumenal subunits of photosystem II (PSII). PSII is a light-driven water plastoquinone oxidoreductase, using light energy to abstract electrons from H(2)O, generating a proton gradient subsequently used for ATP formation. The extrinsic proteins stabilize the structure of photosystem II oxygen-evolving complex (OEC), the ion environment of oxygen evolution and protect the OEC against heat-induced inactivation. The polypeptide is Photosystem II extrinsic protein U, chloroplastic (Cyanidium caldarium (Red alga)).